Here is a 203-residue protein sequence, read N- to C-terminus: Inosine triphosphate pyrophosphatase (203 aa).

13–18 (TGNAKK) lines the ITP pocket. E43 provides a ligand contact to Mg(2+). ITP-binding positions include K55, 71–72 (DT), K88, 147–150 (FGWD), K170, and 175–176 (HR).

It belongs to the HAM1 NTPase family. Homodimer. Mg(2+) serves as cofactor. Mn(2+) is required as a cofactor.

The protein localises to the cytoplasm. The enzyme catalyses ITP + H2O = IMP + diphosphate + H(+). The catalysed reaction is dITP + H2O = dIMP + diphosphate + H(+). It carries out the reaction XTP + H2O = XMP + diphosphate + H(+). It catalyses the reaction N(6)-hydroxy-dATP + H2O = N(6)-hydroxy-dAMP + diphosphate + H(+). Functionally, pyrophosphatase that hydrolyzes the non-canonical purine nucleotides inosine triphosphate (ITP), deoxyinosine triphosphate (dITP) as well as 2'-deoxy-N-6-hydroxylaminopurine triphosphate (dHAPTP) and xanthosine 5'-triphosphate (XTP) to their respective monophosphate derivatives. The enzyme does not distinguish between the deoxy- and ribose forms. Probably excludes non-canonical purines from RNA and DNA precursor pools, thus preventing their incorporation into RNA and DNA and avoiding chromosomal lesions. The sequence is that of Inosine triphosphate pyrophosphatase (itpa) from Danio rerio (Zebrafish).